The primary structure comprises 377 residues: Pulmonary surfactant-associated protein B (377 aa).

Positions 1–22 are cleaved as a signal peptide; that stretch reads MAKSHLLQWLLLLPTLCCPGAA. Positions 23-191 are excised as a propeptide; that stretch reads ITSASSLECA…PHTQDFSEQQ (169 aa). In terms of domain architecture, Saposin A-type spans 24–64; that stretch reads TSASSLECAQGPQFWCQSLEHAVQCRALGHCLQEVWGHAGA. Saposin B-type domains are found at residues 64-146, 195-272, and 291-366; these read ANDL…PRGQ, PLPF…STED, and QDTE…EAPA. 9 disulfides stabilise this stretch: C68–C142, C71–C136, C99–C111, C199–C268, C202–C262, C226–C237, C295–C362, C298–C356, and C321–C331. A propeptide spanning residues 271 to 377 is cleaved from the precursor; sequence EDAMGPALPA…PLQCFQTPHL (107 aa). N-linked (GlcNAc...) asparagine glycosylation occurs at N307.

As to quaternary structure, homodimer; disulfide-linked.

Its subcellular location is the secreted. The protein localises to the extracellular space. It is found in the surface film. Functionally, pulmonary surfactant-associated proteins promote alveolar stability by lowering the surface tension at the air-liquid interface in the peripheral air spaces. SP-B increases the collapse pressure of palmitic acid to nearly 70 millinewtons per meter. In Mus musculus (Mouse), this protein is Pulmonary surfactant-associated protein B (Sftpb).